The following is a 1087-amino-acid chain: Platelet-derived growth factor receptor alpha (1087 aa).

An N-terminal signal peptide occupies residues 1–23 (MGTPPRTFLILGCFLTGPLLTLC). Residues 24–528 (QLPLPTIVPN…PTLRSELTVA (505 aa)) lie on the Extracellular side of the membrane. 5 Ig-like C2-type domains span residues 26-104 (PLPT…YNHT), 116-208 (IYIY…IYIL), 213-312 (QLPV…VHDK), 314-411 (FIHL…SLLI), and 414-517 (PALI…LKLV). N-linked (GlcNAc...) asparagine glycosylation is found at Asn-44, Asn-75, Asn-88, and Asn-102. A disulfide bridge links Cys-49 with Cys-99. 2 disulfides stabilise this stretch: Cys-149/Cys-189 and Cys-235/Cys-290. Asn-353, Asn-359, Asn-458, and Asn-468 each carry an N-linked (GlcNAc...) asparagine glycan. The cysteines at positions 435 and 501 are disulfide-linked. A helical membrane pass occupies residues 529–549 (AAVLVLLVIVIISLIVLVIIW). The Cytoplasmic segment spans residues 550 to 1087 (KQKPRYEIRW…SSDLVEDSFL (538 aa)). Phosphotyrosine; by autocatalysis occurs at positions 572 and 574. Residues 593-954 (LVLGRILGSG…HLSEIVESLL (362 aa)) enclose the Protein kinase domain. ATP-binding positions include 599 to 607 (LGSGAFGKV) and Lys-627. Phosphotyrosine; by autocatalysis occurs at positions 720, 731, 742, 754, 762, and 768. The Proton acceptor role is filled by Asp-818. A phosphotyrosine; by autocatalysis mark is found at Tyr-849 and Tyr-988. Positions 1000 to 1011 (KDRESGFDEQRL) are enriched in basic and acidic residues. Residues 1000-1059 (KDRESGFDEQRLSADSGYITPLPDIDPVSEDELGKRNRHSSQTSEESAIETGSSSSTFIK) are disordered. At Tyr-1017 the chain carries Phosphotyrosine; by autocatalysis. Residues 1039-1057 (SSQTSEESAIETGSSSSTF) are compositionally biased toward polar residues.

Belongs to the protein kinase superfamily. Tyr protein kinase family. CSF-1/PDGF receptor subfamily. In terms of assembly, interacts with homodimeric PDGFA, PDGFB and PDGFC, and with heterodimers formed by PDGFA and PDGFB. Monomer in the absence of bound ligand. Interaction with dimeric PDGFA, PDGFB and/or PDGFC leads to receptor dimerization, where both PDGFRA homodimers and heterodimers with PDGFRB are observed. In terms of processing, ubiquitinated, leading to its internalization and degradation. Autophosphorylated on tyrosine residues upon ligand binding. Autophosphorylation occurs in trans, i.e. one subunit of the dimeric receptor phosphorylates tyrosine residues on the other subunit.

It is found in the cell membrane. The protein localises to the cell projection. Its subcellular location is the cilium. The protein resides in the golgi apparatus. It catalyses the reaction L-tyrosyl-[protein] + ATP = O-phospho-L-tyrosyl-[protein] + ADP + H(+). With respect to regulation, present in an inactive conformation in the absence of bound ligand. Binding of PDGFA and/or PDGFB leads to dimerization and activation by autophosphorylation on tyrosine residues. Tyrosine-protein kinase that acts as a cell-surface receptor for PDGFA, PDGFB and PDGFC and plays an essential role in the regulation of embryonic development, cell proliferation, survival and chemotaxis. Depending on the context, promotes or inhibits cell proliferation and cell migration. Plays an important role in the differentiation of bone marrow-derived mesenchymal stem cells. Required for normal skeleton development. Required for normal development of the gastrointestinal tract. Plays a role in cell migration and chemotaxis in wound healing. Plays a role in platelet activation, secretion of agonists from platelet granules, and in thrombin-induced platelet aggregation. Binding of its cognate ligands - homodimeric PDGFA, homodimeric PDGFB, heterodimers formed by PDGFA and PDGFB or homodimeric PDGFC -leads to the activation of several signaling cascades; the response depends on the nature of the bound ligand and is modulated by the formation of heterodimers between PDGFRA and PDGFRB. Phosphorylates PIK3R1, PLCG1, and PTPN11. Activation of PLCG1 leads to the production of the cellular signaling molecules diacylglycerol and inositol 1,4,5-trisphosphate, mobilization of cytosolic Ca(2+) and the activation of protein kinase C. Phosphorylates PIK3R1, the regulatory subunit of phosphatidylinositol 3-kinase, and thereby mediates activation of the AKT1 signaling pathway. Mediates activation of HRAS and of the MAP kinases MAPK1/ERK2 and/or MAPK3/ERK1. Promotes activation of STAT family members STAT1, STAT3 and STAT5A and/or STAT5B. Receptor signaling is down-regulated by protein phosphatases that dephosphorylate the receptor and its down-stream effectors, and by rapid internalization of the activated receptor. The polypeptide is Platelet-derived growth factor receptor alpha (PDGFRA) (Gallus gallus (Chicken)).